The primary structure comprises 517 residues: Tyrosine-protein kinase Fgr (517 aa).

Gly-2 carries the N-myristoyl glycine lipid modification. S-palmitoyl cysteine attachment occurs at residues Cys-3 and Cys-6. Over residues 17–33 (VGLEGDFRSQGAEERYY) the composition is skewed to basic and acidic residues. Residues 17–46 (VGLEGDFRSQGAEERYYPDPTQGRSSSISP) are disordered. A Phosphotyrosine modification is found at Tyr-32. Ser-50 carries the phosphoserine modification. An SH3 domain is found at 65–126 (TGVTIFVALY…PSNYVAPVDS (62 aa)). Residues 132–229 (WYFGKISRKD…GLCYLLTAPC (98 aa)) form the SH2 domain. At Tyr-196 the chain carries Phosphotyrosine. A Phosphoserine modification is found at Ser-206. Residues 251 to 504 (IALDRRLGTG…YLQSFLEDYF (254 aa)) enclose the Protein kinase domain. ATP-binding positions include 257 to 265 (LGTGCFGDV) and Lys-279. Asp-370 acts as the Proton acceptor in catalysis. Tyr-400 is subject to Phosphotyrosine; by autocatalysis. Position 511 is a phosphotyrosine; by SRC (Tyr-511).

The protein belongs to the protein kinase superfamily. Tyr protein kinase family. SRC subfamily. Interacts with ITGB1, ITGB2, MS4A2/FCER1B and FCGR2. Interacts (via SH2 domain) with SYK (tyrosine phosphorylated). Interacts (via SH2 domain) with FLT3 (tyrosine phosphorylated). Interacts with PTK2/FAK1. Interacts (via SH2 domain) with HCLS1 (tyrosine phosphorylated by SYK). Interacts with SIRPA and PTPNS1. Interacts (not phosphorylated on tyrosine residues) with CBL; FGR tyrosine phosphorylation promotes dissociation. Interacts with CLNK. Ubiquitinated. Becomes ubiquitinated in response to ITGB2 signaling; this does not lead to degradation. Post-translationally, phosphorylated. Autophosphorylated on tyrosine residues. Becomes phosphorylated in response to FCGR2 engagement, cell adhesion and signaling by ITGB2. Prior phosphorylation at Tyr-511 by SRC inhibits ulterior autophosphorylation at Tyr-400. Detected in brain cortex (at protein level).

It is found in the cell membrane. Its subcellular location is the cell projection. The protein resides in the ruffle membrane. It localises to the cytoplasm. The protein localises to the cytosol. It is found in the cytoskeleton. Its subcellular location is the mitochondrion inner membrane. The protein resides in the mitochondrion intermembrane space. The enzyme catalyses L-tyrosyl-[protein] + ATP = O-phospho-L-tyrosyl-[protein] + ADP + H(+). With respect to regulation, activated by autophosphorylation. Prior phosphorylation at Tyr-511 by SRC inhibits ulterior autophosphorylation at Tyr-400. Activated by phorbol myristate acetate, phosphatidic acid and poly-Lys. Binding (via SH2 domain) of HCLS1 that is already phosphorylated by SYK strongly increases kinase activity. Non-receptor tyrosine-protein kinase that transmits signals from cell surface receptors devoid of kinase activity and contributes to the regulation of immune responses, including neutrophil, monocyte, macrophage and mast cell functions, cytoskeleton remodeling in response to extracellular stimuli, phagocytosis, cell adhesion and migration. Promotes mast cell degranulation, release of inflammatory cytokines and IgE-mediated anaphylaxis. Acts downstream of receptors that bind the Fc region of immunoglobulins, such as MS4A2/FCER1B, FCER1G and FCGR2. Acts downstream of ITGB1 and ITGB2, and regulates actin cytoskeleton reorganization, cell spreading and adhesion. Depending on the context, activates or inhibits cellular responses. Functions as a negative regulator of ITGB2 signaling, phagocytosis and SYK activity in monocytes. Required for normal ITGB1 and ITGB2 signaling, normal cell spreading and adhesion in neutrophils and macrophages. Functions as a positive regulator of cell migration and regulates cytoskeleton reorganization via RAC1 activation. Phosphorylates SYK (in vitro) and promotes SYK-dependent activation of AKT1 and MAP kinase signaling. Phosphorylates PLD2 in antigen-stimulated mast cells, leading to PLD2 activation and the production of the signaling molecules lysophosphatidic acid and diacylglycerol. Promotes activation of PIK3R1. Phosphorylates FASLG, and thereby regulates its ubiquitination and subsequent internalization. Phosphorylates ABL1. Promotes phosphorylation of CBL, CTTN, PIK3R1, PTK2/FAK1, PTK2B/PYK2 and VAV2. Phosphorylates HCLS1 that has already been phosphorylated by SYK, but not unphosphorylated HCLS1. Together with CLNK, it acts as a negative regulator of natural killer cell-activating receptors and inhibits interferon-gamma production. The protein is Tyrosine-protein kinase Fgr (Fgr) of Rattus norvegicus (Rat).